We begin with the raw amino-acid sequence, 314 residues long: Acetaldehyde dehydrogenase 2 (314 aa).

11–14 (SGNI) serves as a coordination point for NAD(+). Cysteine 129 serves as the catalytic Acyl-thioester intermediate. NAD(+) is bound by residues 160-168 (SAGPGTRAN) and asparagine 291.

This sequence belongs to the acetaldehyde dehydrogenase family.

The enzyme catalyses acetaldehyde + NAD(+) + CoA = acetyl-CoA + NADH + H(+). This Rhodococcus erythropolis (strain PR4 / NBRC 100887) protein is Acetaldehyde dehydrogenase 2.